The chain runs to 304 residues: Energy-coupling factor transporter ATP-binding protein EcfA2 (304 aa).

The ABC transporter domain maps to 3 to 261; it reads IIVKNISYIY…EKFLVENKLK (259 aa). Residue 40-47 participates in ATP binding; it reads GSTGSGKT.

This sequence belongs to the ABC transporter superfamily. Energy-coupling factor EcfA family. In terms of assembly, forms a stable energy-coupling factor (ECF) transporter complex composed of 2 membrane-embedded substrate-binding proteins (S component), 2 ATP-binding proteins (A component) and 2 transmembrane proteins (T component).

Its subcellular location is the cell membrane. ATP-binding (A) component of a common energy-coupling factor (ECF) ABC-transporter complex. Unlike classic ABC transporters this ECF transporter provides the energy necessary to transport a number of different substrates. This Mycoplasmopsis pulmonis (strain UAB CTIP) (Mycoplasma pulmonis) protein is Energy-coupling factor transporter ATP-binding protein EcfA2.